The following is a 227-amino-acid chain: Cytidylate kinase (227 aa).

Position 12 to 20 (Gly12 to Thr20) interacts with ATP.

This sequence belongs to the cytidylate kinase family. Type 1 subfamily.

It is found in the cytoplasm. The catalysed reaction is CMP + ATP = CDP + ADP. It carries out the reaction dCMP + ATP = dCDP + ADP. This Xanthomonas axonopodis pv. citri (strain 306) protein is Cytidylate kinase.